The primary structure comprises 95 residues: Co-chaperonin GroES (95 aa).

Belongs to the GroES chaperonin family. In terms of assembly, heptamer of 7 subunits arranged in a ring. Interacts with the chaperonin GroEL.

It localises to the cytoplasm. Functionally, together with the chaperonin GroEL, plays an essential role in assisting protein folding. The GroEL-GroES system forms a nano-cage that allows encapsulation of the non-native substrate proteins and provides a physical environment optimized to promote and accelerate protein folding. GroES binds to the apical surface of the GroEL ring, thereby capping the opening of the GroEL channel. The sequence is that of Co-chaperonin GroES from Pseudoalteromonas translucida (strain TAC 125).